The following is a 101-amino-acid chain: NADH-quinone oxidoreductase subunit K (101 aa).

A run of 3 helical transmembrane segments spans residues Leu4–Leu24, Ile30–Phe50, and Ile61–Leu81.

It belongs to the complex I subunit 4L family. NDH-1 is composed of 14 different subunits. Subunits NuoA, H, J, K, L, M, N constitute the membrane sector of the complex.

It is found in the cell inner membrane. It catalyses the reaction a quinone + NADH + 5 H(+)(in) = a quinol + NAD(+) + 4 H(+)(out). In terms of biological role, NDH-1 shuttles electrons from NADH, via FMN and iron-sulfur (Fe-S) centers, to quinones in the respiratory chain. The immediate electron acceptor for the enzyme in this species is believed to be ubiquinone. Couples the redox reaction to proton translocation (for every two electrons transferred, four hydrogen ions are translocated across the cytoplasmic membrane), and thus conserves the redox energy in a proton gradient. This chain is NADH-quinone oxidoreductase subunit K, found in Paraburkholderia phymatum (strain DSM 17167 / CIP 108236 / LMG 21445 / STM815) (Burkholderia phymatum).